Reading from the N-terminus, the 336-residue chain is 3-hydroxyisobutyrate dehydrogenase, mitochondrial (336 aa).

Residues 1-36 (MAASLRLLGAASGLRYWSRRLRPAAGSFAAVCSRSV) constitute a mitochondrion transit peptide. 40-68 (TPVGFIGLGNMGNPMAKNLMKHGYPLIIY) provides a ligand contact to NAD(+). N6-acetyllysine; alternate is present on residues lysine 60 and lysine 76. N6-succinyllysine; alternate occurs at positions 60 and 76. N6-succinyllysine is present on lysine 95. Residues 103-104 (LP) and asparagine 108 each bind NAD(+). Lysine 121 carries the post-translational modification N6-acetyllysine. Threonine 134 contacts NAD(+). Residue lysine 141 is modified to N6-succinyllysine. At lysine 145 the chain carries N6-acetyllysine. Residue lysine 149 is modified to N6-acetyllysine; alternate. The residue at position 149 (lysine 149) is an N6-succinyllysine; alternate. The active site involves lysine 209. Lysine 238 and lysine 242 each carry N6-acetyllysine; alternate. Residues lysine 238 and lysine 242 each carry the N6-succinyllysine; alternate modification. An NAD(+)-binding site is contributed by lysine 284. Lysine 297 carries the N6-succinyllysine modification. An N6-acetyllysine; alternate modification is found at lysine 321. At lysine 321 the chain carries N6-succinyllysine; alternate.

Belongs to the HIBADH-related family. 3-hydroxyisobutyrate dehydrogenase subfamily. In terms of assembly, homodimer. As to expression, detected in skin fibroblasts.

The protein resides in the mitochondrion. The enzyme catalyses 3-hydroxy-2-methylpropanoate + NAD(+) = 2-methyl-3-oxopropanoate + NADH + H(+). It functions in the pathway amino-acid degradation; L-valine degradation. The protein is 3-hydroxyisobutyrate dehydrogenase, mitochondrial (HIBADH) of Homo sapiens (Human).